The chain runs to 883 residues: DNA double-strand break repair Rad50 ATPase (883 aa).

ATP-binding positions include lysine 12, 32 to 38 (NGSGKSS), and glutamine 137. A coiled-coil region spans residues 244-283 (ERYEESRTALADVEETIADVREAVAEAERERETLADRVSD). Disordered stretches follow at residues 271–290 (ERER…RASD) and 305–326 (DDPD…REAV). Residues 313–326 (SAERDAVADQREAV) are compositionally biased toward basic and acidic residues. Coiled-coil stretches lie at residues 336–389 (AVSR…IEAL) and 414–452 (LDDA…LDEG). A Zinc-hook domain is found at 407–506 (FGAAEAFLDD…RVDRGESLVA (100 aa)). Zn(2+) is bound by residues cysteine 454 and cysteine 457. The tract at residues 508 to 565 (EDRVDDLEQQRERAVERRDEQADIADAKRDQAAEKRDRAADLDAEAEDARADAAAKRD) is disordered. Coiled coils occupy residues 571-604 (RETL…AADA) and 668-720 (KLQA…VTAL).

The protein belongs to the SMC family. RAD50 subfamily. In terms of assembly, homodimer. Forms a heterotetramer composed of two Mre11 subunits and two Rad50 subunits. Zn(2+) serves as cofactor.

Part of the Rad50/Mre11 complex, which is involved in the early steps of DNA double-strand break (DSB) repair. Rad50 controls the balance between DNA end bridging and DNA resection via ATP-dependent structural rearrangements of the Rad50/Mre11 complex. This chain is DNA double-strand break repair Rad50 ATPase, found in Halobacterium salinarum (strain ATCC 700922 / JCM 11081 / NRC-1) (Halobacterium halobium).